The following is a 255-amino-acid chain: MFNLFPPFGANTAIFNDAPQPWQVGFQDGASPTQEGITELHDSIFFYLVIICFGVLWVLSSVIVNFNSNKSQLVYKYANHGTLIELIWTITPALVLIAIAFPSFKLLYLMDEVISPSMTVKVAGHQWYWSAEYSDFINEDGESIEFDSYMVPETDLEDGQLRLLEVDNRMVVPIDTHIRFIVTGADVIHDFAVPSLGLKIDAVPGRLNQTSVLIEREGVFYGQCSEICGVYHGFMPIAIEAVTPEKYLAWIDSQA.

The N-terminal stretch at 1 to 16 (MFNLFPPFGANTAIFN) is a signal peptide. The Mitochondrial intermembrane portion of the chain corresponds to 17–43 (DAPQPWQVGFQDGASPTQEGITELHDS). The chain crosses the membrane as a helical span at residues 44-64 (IFFYLVIICFGVLWVLSSVIV). The Mitochondrial matrix portion of the chain corresponds to 65–80 (NFNSNKSQLVYKYANH). Residues 81–101 (GTLIELIWTITPALVLIAIAF) traverse the membrane as a helical segment. Topologically, residues 102 to 255 (PSFKLLYLMD…KYLAWIDSQA (154 aa)) are mitochondrial intermembrane. Cu cation is bound by residues His-189, Cys-224, Glu-226, Cys-228, His-232, and Met-235. Glu-226 is a Mg(2+) binding site.

This sequence belongs to the cytochrome c oxidase subunit 2 family. As to quaternary structure, component of the cytochrome c oxidase (complex IV, CIV), a multisubunit enzyme composed of a catalytic core of 3 subunits and several supernumerary subunits. The complex exists as a monomer or a dimer and forms supercomplexes (SCs) in the inner mitochondrial membrane with ubiquinol-cytochrome c oxidoreductase (cytochrome b-c1 complex, complex III, CIII). Cu cation is required as a cofactor.

It is found in the mitochondrion inner membrane. The enzyme catalyses 4 Fe(II)-[cytochrome c] + O2 + 8 H(+)(in) = 4 Fe(III)-[cytochrome c] + 2 H2O + 4 H(+)(out). Its function is as follows. Component of the cytochrome c oxidase, the last enzyme in the mitochondrial electron transport chain which drives oxidative phosphorylation. The respiratory chain contains 3 multisubunit complexes succinate dehydrogenase (complex II, CII), ubiquinol-cytochrome c oxidoreductase (cytochrome b-c1 complex, complex III, CIII) and cytochrome c oxidase (complex IV, CIV), that cooperate to transfer electrons derived from NADH and succinate to molecular oxygen, creating an electrochemical gradient over the inner membrane that drives transmembrane transport and the ATP synthase. Cytochrome c oxidase is the component of the respiratory chain that catalyzes the reduction of oxygen to water. Electrons originating from reduced cytochrome c in the intermembrane space (IMS) are transferred via the dinuclear copper A center (CU(A)) of subunit 2 and heme A of subunit 1 to the active site in subunit 1, a binuclear center (BNC) formed by heme A3 and copper B (CU(B)). The BNC reduces molecular oxygen to 2 water molecules using 4 electrons from cytochrome c in the IMS and 4 protons from the mitochondrial matrix. The polypeptide is Cytochrome c oxidase subunit 2 (COX2) (Mycosarcoma maydis (Corn smut fungus)).